Consider the following 228-residue polypeptide: Hematopoietically-expressed homeobox protein hhex (228 aa).

The segment at residues 117–176 (RKGGQVRFSNDQTIELEKKFETQKYLSPPERKRLAKMLQLSERQVKTWFQNRRAKWRRLK) is a DNA-binding region (homeobox). The interval 175 to 228 (LKQENPPSTGKREAEDSDTRRLSDAAARARELESGASTDSEELLDIEDEHQFTL) is disordered. Positions 184 to 207 (GKREAEDSDTRRLSDAAARARELE) are enriched in basic and acidic residues. The span at 213–222 (DSEELLDIED) shows a compositional bias: acidic residues.

In terms of tissue distribution, expressed in embryonic endothelial and blood lineages. From late-blastula stage, expression is restricted to the dorsal marginal region of the extraembryonic yolk syncytial layer (YSL). By the onset of gastrulation, expressed in the entire dorsal half of the YSL. Post-gastrulation, expression appears in both anterior and posterior lateral plate mesoderm by the 3-somite stage. Posteriorly, expression is in the intermediate cell mass (ICM), which contains both endothelial and blood precursors. Subsequently expressed in the developing endothelial cells including the endocardium until the onset of circulation (24 hpf) and disappears completely by 30 hpf, at which point expression is seen in the thyroid and liver primordia. Also expressed in the developing biliary tree and pancreas.

It localises to the nucleus. In terms of biological role, recognizes the DNA sequence 5'-ATTAA-3'. Transcriptional repressor. Regulates the differentiation of both endothelial and blood cells. Plays a role in embryonic dorsoventral patterning by regulating bmp expression. May establish anterior identity. Functions in the embryo to regulate liver development. Functions extraembryonically to generate organ chirality. The chain is Hematopoietically-expressed homeobox protein hhex from Danio rerio (Zebrafish).